The sequence spans 179 residues: Large ribosomal subunit protein uL5 (179 aa).

It belongs to the universal ribosomal protein uL5 family. In terms of assembly, part of the 50S ribosomal subunit; part of the 5S rRNA/L5/L18/L25 subcomplex. Contacts the 5S rRNA and the P site tRNA. Forms a bridge to the 30S subunit in the 70S ribosome.

Its function is as follows. This is one of the proteins that bind and probably mediate the attachment of the 5S RNA into the large ribosomal subunit, where it forms part of the central protuberance. In the 70S ribosome it contacts protein S13 of the 30S subunit (bridge B1b), connecting the 2 subunits; this bridge is implicated in subunit movement. Contacts the P site tRNA; the 5S rRNA and some of its associated proteins might help stabilize positioning of ribosome-bound tRNAs. The chain is Large ribosomal subunit protein uL5 from Methylococcus capsulatus (strain ATCC 33009 / NCIMB 11132 / Bath).